The chain runs to 136 residues: Aspartate 1-decarboxylase (136 aa).

Serine 25 functions as the Schiff-base intermediate with substrate; via pyruvic acid in the catalytic mechanism. Serine 25 carries the pyruvic acid (Ser) modification. Threonine 57 contacts substrate. The active-site Proton donor is tyrosine 58. Residue glycine 73 to alanine 75 coordinates substrate.

This sequence belongs to the PanD family. In terms of assembly, heterooctamer of four alpha and four beta subunits. It depends on pyruvate as a cofactor. Is synthesized initially as an inactive proenzyme, which is activated by self-cleavage at a specific serine bond to produce a beta-subunit with a hydroxyl group at its C-terminus and an alpha-subunit with a pyruvoyl group at its N-terminus.

The protein localises to the cytoplasm. The enzyme catalyses L-aspartate + H(+) = beta-alanine + CO2. It functions in the pathway cofactor biosynthesis; (R)-pantothenate biosynthesis; beta-alanine from L-aspartate: step 1/1. In terms of biological role, catalyzes the pyruvoyl-dependent decarboxylation of aspartate to produce beta-alanine. This Mycolicibacterium smegmatis (strain ATCC 700084 / mc(2)155) (Mycobacterium smegmatis) protein is Aspartate 1-decarboxylase.